Reading from the N-terminus, the 438-residue chain is Coenzyme A disulfide reductase (438 aa).

8–33 (GAVAGGATCASQIRRLDKESDIIIFE) contributes to the FAD binding site. Residues Thr-15, Gln-19, Arg-22, Ser-39, and Asn-42 each coordinate substrate. The Nucleophile role is filled by Cys-43. The active-site Redox-active is the Cys-43. A substrate-binding site is contributed by Lys-71. 151–166 (VLVVGAGYVSLEVLEN) contributes to the NADP(+) binding site. 267–277 (TNVPNIYAIGD) is an FAD binding site. Residue His-299 coordinates substrate. Tyr-419 is an FAD binding site. Lys-427 is a binding site for substrate.

This sequence belongs to the class-III pyridine nucleotide-disulfide oxidoreductase family. Homodimer. FAD is required as a cofactor.

It carries out the reaction NADP(+) + 2 CoA = CoA-disulfide + NADPH + H(+). Its function is as follows. Catalyzes specifically the NADPH-dependent reduction of coenzyme A disulfide. Is also active with other disulfide substrates containing at least one 4'-phosphopantethienyl moiety such as 4,4'-diphosphopantethine, but is not able to reduce oxidized glutathione, cystine, pantethine, or H(2)O(2). This chain is Coenzyme A disulfide reductase (cdr), found in Staphylococcus aureus (strain NCTC 8325 / PS 47).